The chain runs to 28 residues: Cyclotide vodo I3 (28 aa).

3 disulfide bridges follow: C4–C18, C8–C20, and C13–C25.

This is a cyclic peptide. Post-translationally, contains 3 disulfide bonds.

Its function is as follows. Probably participates in a plant defense mechanism. The chain is Cyclotide vodo I3 from Viola odorata (Sweet violet).